The following is a 241-amino-acid chain: ATP synthase subunit a (241 aa).

5 helical membrane-spanning segments follow: residues 30-50, 91-111, 128-148, 193-213, and 214-234; these read GQVF…ISLG, FIGT…LIPW, INTT…AGLS, LVVG…VMFL, and GLFT…YYIG.

This sequence belongs to the ATPase A chain family. As to quaternary structure, F-type ATPases have 2 components, CF(1) - the catalytic core - and CF(0) - the membrane proton channel. CF(1) has five subunits: alpha(3), beta(3), gamma(1), delta(1), epsilon(1). CF(0) has four main subunits: a, b, b' and c.

Its subcellular location is the cellular thylakoid membrane. In terms of biological role, key component of the proton channel; it plays a direct role in the translocation of protons across the membrane. In Prochlorococcus marinus (strain MIT 9301), this protein is ATP synthase subunit a.